The primary structure comprises 456 residues: UDP-N-acetylmuramoylalanine--D-glutamate ligase (456 aa).

113–119 (GTNGKTT) lines the ATP pocket.

This sequence belongs to the MurCDEF family.

The protein localises to the cytoplasm. It catalyses the reaction UDP-N-acetyl-alpha-D-muramoyl-L-alanine + D-glutamate + ATP = UDP-N-acetyl-alpha-D-muramoyl-L-alanyl-D-glutamate + ADP + phosphate + H(+). Its pathway is cell wall biogenesis; peptidoglycan biosynthesis. Cell wall formation. Catalyzes the addition of glutamate to the nucleotide precursor UDP-N-acetylmuramoyl-L-alanine (UMA). The sequence is that of UDP-N-acetylmuramoylalanine--D-glutamate ligase from Crocosphaera subtropica (strain ATCC 51142 / BH68) (Cyanothece sp. (strain ATCC 51142)).